The sequence spans 94 residues: Small ribosomal subunit protein bS18 (94 aa).

Polar residues predominate over residues 1–11; sequence MANERPTSQQR. Residues 1–24 form a disordered region; that stretch reads MANERPTSQQRPAGGPRKRRPFQR.

This sequence belongs to the bacterial ribosomal protein bS18 family. Part of the 30S ribosomal subunit. Forms a tight heterodimer with protein bS6.

In terms of biological role, binds as a heterodimer with protein bS6 to the central domain of the 16S rRNA, where it helps stabilize the platform of the 30S subunit. The sequence is that of Small ribosomal subunit protein bS18 from Pelobacter propionicus (strain DSM 2379 / NBRC 103807 / OttBd1).